The primary structure comprises 443 residues: D-aminoacyl-tRNA deacylase (443 aa).

It belongs to the DtdA deacylase family. As to quaternary structure, monomer. It depends on Zn(2+) as a cofactor.

The enzyme catalyses a D-aminoacyl-tRNA + H2O = a tRNA + a D-alpha-amino acid + H(+). The catalysed reaction is glycyl-tRNA(Ala) + H2O = tRNA(Ala) + glycine + H(+). D-aminoacyl-tRNA deacylase with broad substrate specificity. By recycling D-aminoacyl-tRNA to D-amino acids and free tRNA molecules, this enzyme counteracts the toxicity associated with the formation of D-aminoacyl-tRNA entities in vivo. This Methanocorpusculum labreanum (strain ATCC 43576 / DSM 4855 / Z) protein is D-aminoacyl-tRNA deacylase.